Consider the following 167-residue polypeptide: Gametocyte-specific factor 1 (167 aa).

S8 bears the Phosphoserine mark. 2 CHHC U11-48K-type zinc fingers span residues 14 to 41 and 48 to 75; these read LLQC…RKNH and LATC…DDRS. Zn(2+) is bound by residues C17, H23, H33, C37, C51, H57, H67, and C71.

The protein belongs to the UPF0224 (FAM112) family.

The protein localises to the cytoplasm. Functionally, required for spermatogenesis and is involved in the suppression of retrotransposon transcription in male germ cells. In Homo sapiens (Human), this protein is Gametocyte-specific factor 1 (GTSF1).